Here is a 933-residue protein sequence, read N- to C-terminus: Phospholipase SGR2 (933 aa).

Over residues methionine 1–asparagine 14 the composition is skewed to basic and acidic residues. The tract at residues methionine 1–lysine 22 is disordered. Residue serine 444 is part of the active site. Disordered regions lie at residues proline 475–asparagine 517 and arginine 553–asparagine 598. Residues glutamine 505 to asparagine 517 show a composition bias toward polar residues. Over residues arginine 553 to serine 563 the composition is skewed to basic and acidic residues. Positions aspartate 593–serine 631 form a coiled coil. The 200-residue stretch at leucine 669–arginine 868 folds into the DDHD domain. The segment at proline 871–aspartate 903 is disordered. A compositionally biased stretch (basic and acidic residues) spans aspartate 885–alanine 902.

In terms of assembly, forms oligomers. As to expression, expressed in roots, hypocotyls, leaves, stems and floral buds, and, at low levels, in siliques.

The protein localises to the vacuole membrane. Its function is as follows. Involved in vacuolar formation or function (e.g. formation of vacuolar membrane 'bulbs'). Required for amyloplast sedimentation in the endodermis during shoot gravitropism, which are thus acting as statoliths. Particularly important for the negative gravitropism leading to leaf movement observed in darkness. This is Phospholipase SGR2 (SGR2) from Arabidopsis thaliana (Mouse-ear cress).